We begin with the raw amino-acid sequence, 296 residues long: tRNA uridine(34) hydroxylase (296 aa).

One can recognise a Rhodanese domain in the interval 132–226; sequence AGRPVVMLDT…YFEEVGGAHY (95 aa). The active-site Cysteine persulfide intermediate is the Cys186.

This sequence belongs to the TrhO family.

The enzyme catalyses uridine(34) in tRNA + AH2 + O2 = 5-hydroxyuridine(34) in tRNA + A + H2O. In terms of biological role, catalyzes oxygen-dependent 5-hydroxyuridine (ho5U) modification at position 34 in tRNAs. In Burkholderia thailandensis (strain ATCC 700388 / DSM 13276 / CCUG 48851 / CIP 106301 / E264), this protein is tRNA uridine(34) hydroxylase.